The sequence spans 71 residues: Exodeoxyribonuclease 7 small subunit (71 aa).

It belongs to the XseB family. In terms of assembly, heterooligomer composed of large and small subunits.

It is found in the cytoplasm. It catalyses the reaction Exonucleolytic cleavage in either 5'- to 3'- or 3'- to 5'-direction to yield nucleoside 5'-phosphates.. In terms of biological role, bidirectionally degrades single-stranded DNA into large acid-insoluble oligonucleotides, which are then degraded further into small acid-soluble oligonucleotides. This is Exodeoxyribonuclease 7 small subunit from Streptococcus equi subsp. equi (strain 4047).